We begin with the raw amino-acid sequence, 238 residues long: Cysteine-rich venom protein natrin-2 (238 aa).

An N-terminal signal peptide occupies residues 1–19 (MIAFIVLLSLAAVLQQSSG). Positions 38-164 (VDKHNALRRS…SSKYLYVCQY (127 aa)) constitute an SCP domain. Cystine bridges form between cysteine 75-cysteine 153, cysteine 92-cysteine 165, cysteine 148-cysteine 162, cysteine 184-cysteine 191, cysteine 187-cysteine 196, cysteine 200-cysteine 233, cysteine 209-cysteine 227, and cysteine 218-cysteine 231. One can recognise a ShKT domain in the interval 200–233 (CKHHNVFSNCQSLAKQNACQTEWMKSKCAASCFC).

Expressed by the venom gland.

The protein localises to the secreted. Its function is as follows. Inhibits carbachol-induced muscle contraction and weakly blocks muscle contraction evoked by potassium. The polypeptide is Cysteine-rich venom protein natrin-2 (Naja atra (Chinese cobra)).